We begin with the raw amino-acid sequence, 89 residues long: Small ribosomal subunit protein bS20 (89 aa).

Belongs to the bacterial ribosomal protein bS20 family.

In terms of biological role, binds directly to 16S ribosomal RNA. This Sulfurovum sp. (strain NBC37-1) protein is Small ribosomal subunit protein bS20.